Reading from the N-terminus, the 461-residue chain is Cysteine--tRNA ligase (461 aa).

Cysteine 28 serves as a coordination point for Zn(2+). The 'HIGH' region motif lies at 30 to 40 (ITVYDLCHIGH). Zn(2+) contacts are provided by cysteine 209, histidine 234, and glutamate 238. The short motif at 266 to 270 (KMSKS) is the 'KMSKS' region element. Lysine 269 contacts ATP.

Belongs to the class-I aminoacyl-tRNA synthetase family. As to quaternary structure, monomer. Zn(2+) is required as a cofactor.

The protein localises to the cytoplasm. The catalysed reaction is tRNA(Cys) + L-cysteine + ATP = L-cysteinyl-tRNA(Cys) + AMP + diphosphate. The sequence is that of Cysteine--tRNA ligase from Escherichia coli (strain K12 / MC4100 / BW2952).